Consider the following 98-residue polypeptide: Large ribosomal subunit protein uL23 (98 aa).

The protein belongs to the universal ribosomal protein uL23 family. Part of the 50S ribosomal subunit. Contacts protein L29, and trigger factor when it is bound to the ribosome.

One of the early assembly proteins it binds 23S rRNA. One of the proteins that surrounds the polypeptide exit tunnel on the outside of the ribosome. Forms the main docking site for trigger factor binding to the ribosome. This is Large ribosomal subunit protein uL23 from Methylorubrum populi (strain ATCC BAA-705 / NCIMB 13946 / BJ001) (Methylobacterium populi).